The following is a 428-amino-acid chain: Serine--tRNA ligase (428 aa).

Threonine 235–glutamate 237 contacts L-serine. Arginine 266–glutamate 268 contributes to the ATP binding site. Residue glutamate 289 participates in L-serine binding. Glutamate 353–serine 356 is an ATP binding site. Serine 389 is a binding site for L-serine.

It belongs to the class-II aminoacyl-tRNA synthetase family. Type-1 seryl-tRNA synthetase subfamily. Homodimer. The tRNA molecule binds across the dimer.

Its subcellular location is the cytoplasm. The catalysed reaction is tRNA(Ser) + L-serine + ATP = L-seryl-tRNA(Ser) + AMP + diphosphate + H(+). It carries out the reaction tRNA(Sec) + L-serine + ATP = L-seryl-tRNA(Sec) + AMP + diphosphate + H(+). It functions in the pathway aminoacyl-tRNA biosynthesis; selenocysteinyl-tRNA(Sec) biosynthesis; L-seryl-tRNA(Sec) from L-serine and tRNA(Sec): step 1/1. Its function is as follows. Catalyzes the attachment of serine to tRNA(Ser). Is also able to aminoacylate tRNA(Sec) with serine, to form the misacylated tRNA L-seryl-tRNA(Sec), which will be further converted into selenocysteinyl-tRNA(Sec). The sequence is that of Serine--tRNA ligase from Shewanella sediminis (strain HAW-EB3).